Here is a 340-residue protein sequence, read N- to C-terminus: Pre-rRNA-processing protein esf-2 (340 aa).

2 stretches are compositionally biased toward basic and acidic residues: residues 1-12 and 19-32; these read MPEDDVRNKFLD and DAGH…DFQK. Residues 1–103 form a disordered region; that stretch reads MPEDDVRNKF…KSVLASDLPG (103 aa). Acidic residues predominate over residues 44-64; it reads DDEDSEADDFTDAEEEHDQDD. A compositionally biased stretch (basic and acidic residues) spans 65 to 95; the sequence is AESKDAPAKDGQETTDGKEKKDGKKEKEKKS. Positions 124–214 constitute an RRM domain; the sequence is GVVYISRVPP…KKGSYYRDDI (91 aa). The interval 272-329 is disordered; the sequence is AKKASKGSKAGGEGAAQVTESTIPSAAATTTTTTNDDKRRTFKQIPLAKKRKLDETQP.

This sequence belongs to the ESF2/ABP1 family.

The protein resides in the nucleus. The protein localises to the nucleolus. Involved in the small subunit (SSU) processome assembly and function, and in the 18S rRNA synthesis. Required for the early cleavages at sites A0, A1 and A2. The sequence is that of Pre-rRNA-processing protein esf-2 (esf-2) from Neurospora crassa (strain ATCC 24698 / 74-OR23-1A / CBS 708.71 / DSM 1257 / FGSC 987).